A 152-amino-acid chain; its full sequence is Ribosome maturation factor RimP (152 aa).

It belongs to the RimP family.

It is found in the cytoplasm. Functionally, required for maturation of 30S ribosomal subunits. The sequence is that of Ribosome maturation factor RimP from Porphyromonas gingivalis (strain ATCC 33277 / DSM 20709 / CIP 103683 / JCM 12257 / NCTC 11834 / 2561).